Reading from the N-terminus, the 159-residue chain is MADVPGAQRAVPGDGPEPRDPLDCWACAVLVTAQNLLVAAFNLLLLVLVLGTILLPAVTMLGFGFLCHSQFLRSQAPPCTAHLRDPGFTALLVTGFLLLVPLLVLALASYRRLCLRLRLADCLVPYSRALYRRRRAPQPRQIRASPGSQAVPTSGKVWV.

2 helical membrane-spanning segments follow: residues Leu-43–Phe-63 and Phe-88–Ala-108. The segment at Pro-137–Val-159 is disordered.

Belongs to the TMEM88 family. As to quaternary structure, interacts (via C-terminus) with DVL1.

It is found in the cell membrane. Inhibits the Wnt/beta-catenin signaling pathway. Crucial for heart development and acts downstream of GATA factors in the pre-cardiac mesoderm to specify lineage commitment of cardiomyocyte development. In Homo sapiens (Human), this protein is Transmembrane protein 88 (TMEM88).